Reading from the N-terminus, the 257-residue chain is Geranylgeranylglyceryl phosphate synthase (257 aa).

Residues D27 and T57 each contribute to the Mg(2+) site. Residues Y175 to G181, G207 to G208, and G229 to N230 contribute to the sn-glycerol 1-phosphate site.

The protein belongs to the GGGP/HepGP synthase family. Group II subfamily. The cofactor is Mg(2+).

It localises to the cytoplasm. The catalysed reaction is sn-glycerol 1-phosphate + (2E,6E,10E)-geranylgeranyl diphosphate = sn-3-O-(geranylgeranyl)glycerol 1-phosphate + diphosphate. The protein operates within membrane lipid metabolism; glycerophospholipid metabolism. In terms of biological role, prenyltransferase that catalyzes the transfer of the geranylgeranyl moiety of geranylgeranyl diphosphate (GGPP) to the C3 hydroxyl of sn-glycerol-1-phosphate (G1P). This reaction is the first ether-bond-formation step in the biosynthesis of archaeal membrane lipids. The protein is Geranylgeranylglyceryl phosphate synthase of Sulfolobus acidocaldarius (strain ATCC 33909 / DSM 639 / JCM 8929 / NBRC 15157 / NCIMB 11770).